The sequence spans 337 residues: Tryptophan--tRNA ligase (337 aa).

Residues 11–13 (QPT) and 19–20 (GN) contribute to the ATP site. A 'HIGH' region motif is present at residues 12-20 (PTGALHLGN). Position 135 (Asp135) interacts with L-tryptophan. ATP contacts are provided by residues 147-149 (GED), Val191, and 200-204 (KMSKS). Positions 200-204 (KMSKS) match the 'KMSKS' region motif.

The protein belongs to the class-I aminoacyl-tRNA synthetase family. In terms of assembly, homodimer.

Its subcellular location is the cytoplasm. It catalyses the reaction tRNA(Trp) + L-tryptophan + ATP = L-tryptophyl-tRNA(Trp) + AMP + diphosphate + H(+). Catalyzes the attachment of tryptophan to tRNA(Trp). In Parasynechococcus marenigrum (strain WH8102), this protein is Tryptophan--tRNA ligase.